Reading from the N-terminus, the 35-residue chain is Cecropin (35 aa).

An Isoleucine amide modification is found at Ile35.

It belongs to the cecropin family.

The protein resides in the secreted. Its function is as follows. Cecropins have lytic and antibacterial activity against several Gram-positive and Gram-negative bacteria. This Bombyx mori (Silk moth) protein is Cecropin.